Consider the following 391-residue polypeptide: GATA-binding factor 6-B (391 aa).

Residues 57-69 (GTHSVNSHWSQAT) show a composition bias toward polar residues. The tract at residues 57–107 (GTHSVNSHWSQATSESSSYSSSSPHPSSRYHYSPSPPMANGSTRDTGYSSS) is disordered. The segment covering 70 to 89 (SESSSYSSSSPHPSSRYHYS) has biased composition (low complexity). Polar residues predominate over residues 96 to 107 (NGSTRDTGYSSS). GATA-type zinc fingers lie at residues 182–206 (CVNC…CNAC) and 236–260 (CANC…CNAC). A disordered region spans residues 277 to 334 (KEGIQTRKRKPKNLNKSKSSSSNGNSSHHITMTPTSTTSSTNSDDCIKNGSPSQNTAP). The span at 282 to 291 (TRKRKPKNLN) shows a compositional bias: basic residues. A compositionally biased stretch (low complexity) spans 292–319 (KSKSSSSNGNSSHHITMTPTSTTSSTNS).

As to expression, in embryos, expressed in the presumptive heart mesoderm. In adults, widely distributed but predominant in the heart.

It is found in the nucleus. In terms of biological role, transcriptional activator that binds 5'-GATA-3'-containing motifs within gene promoters. Regulates cardiac-specific transcription during embryogenesis and thereby cardiogenesis. The chain is GATA-binding factor 6-B (gata6-b) from Xenopus laevis (African clawed frog).